We begin with the raw amino-acid sequence, 461 residues long: Fumarate hydratase class II (461 aa).

Residues Ser97 to Thr99, His127 to Asp130, Ser137 to Asn139, and Thr185 contribute to the substrate site. The Proton donor/acceptor role is filled by His186. Ser316 is a catalytic residue. Substrate contacts are provided by residues Ser317 and Lys322–Asn324.

The protein belongs to the class-II fumarase/aspartase family. Fumarase subfamily. As to quaternary structure, homotetramer.

Its subcellular location is the cytoplasm. It carries out the reaction (S)-malate = fumarate + H2O. Its pathway is carbohydrate metabolism; tricarboxylic acid cycle; (S)-malate from fumarate: step 1/1. Functionally, involved in the TCA cycle. Catalyzes the stereospecific interconversion of fumarate to L-malate. This Staphylococcus aureus (strain Mu50 / ATCC 700699) protein is Fumarate hydratase class II.